Here is a 483-residue protein sequence, read N- to C-terminus: Isocitrate dehydrogenase [NADP] (483 aa).

Thr74 contributes to the NADP(+) binding site. Ser83, Asn85, Arg89, Arg99, and Arg121 together coordinate D-threo-isocitrate. Asp232 is a binding site for Mg(2+). NADP(+)-binding positions include 264 to 270 (HGSAPDI) and Asn277.

It belongs to the isocitrate and isopropylmalate dehydrogenases family. As to quaternary structure, homodimer. Mg(2+) is required as a cofactor. Requires Mn(2+) as cofactor.

It catalyses the reaction D-threo-isocitrate + NADP(+) = 2-oxoglutarate + CO2 + NADPH. Functionally, catalyzes the oxidative decarboxylation of isocitrate to 2-oxoglutarate and carbon dioxide with the concomitant reduction of NADP(+). This Rickettsia conorii (strain ATCC VR-613 / Malish 7) protein is Isocitrate dehydrogenase [NADP] (icd).